A 130-amino-acid polypeptide reads, in one-letter code: Prefoldin subunit alpha (130 aa).

This sequence belongs to the prefoldin subunit alpha family. In terms of assembly, heterohexamer of two alpha and four beta subunits.

The protein localises to the cytoplasm. Its function is as follows. Molecular chaperone capable of stabilizing a range of proteins. Seems to fulfill an ATP-independent, HSP70-like function in archaeal de novo protein folding. The protein is Prefoldin subunit alpha of Thermoplasma volcanium (strain ATCC 51530 / DSM 4299 / JCM 9571 / NBRC 15438 / GSS1).